The sequence spans 332 residues: Phosphatidylglycerol--prolipoprotein diacylglyceryl transferase (332 aa).

A run of 3 helical transmembrane segments spans residues F18 to L38, F66 to Y86, and V111 to L131. Position 159 (R159) interacts with a 1,2-diacyl-sn-glycero-3-phospho-(1'-sn-glycerol). Helical transmembrane passes span G249–F269 and I302–H322.

It belongs to the Lgt family.

Its subcellular location is the cell inner membrane. The enzyme catalyses L-cysteinyl-[prolipoprotein] + a 1,2-diacyl-sn-glycero-3-phospho-(1'-sn-glycerol) = an S-1,2-diacyl-sn-glyceryl-L-cysteinyl-[prolipoprotein] + sn-glycerol 1-phosphate + H(+). The protein operates within protein modification; lipoprotein biosynthesis (diacylglyceryl transfer). In terms of biological role, catalyzes the transfer of the diacylglyceryl group from phosphatidylglycerol to the sulfhydryl group of the N-terminal cysteine of a prolipoprotein, the first step in the formation of mature lipoproteins. The protein is Phosphatidylglycerol--prolipoprotein diacylglyceryl transferase of Treponema pallidum (strain Nichols).